Reading from the N-terminus, the 211-residue chain is uncharacterized protein (211 aa).

This sequence belongs to the A.longa ORF167/ORF288 family.

It localises to the plastid. This is an uncharacterized protein from Euglena longa (Euglenophycean alga).